The sequence spans 485 residues: Aspartyl/glutamyl-tRNA(Asn/Gln) amidotransferase subunit B (485 aa).

The protein belongs to the GatB/GatE family. GatB subfamily. As to quaternary structure, heterotrimer of A, B and C subunits.

It carries out the reaction L-glutamyl-tRNA(Gln) + L-glutamine + ATP + H2O = L-glutaminyl-tRNA(Gln) + L-glutamate + ADP + phosphate + H(+). The enzyme catalyses L-aspartyl-tRNA(Asn) + L-glutamine + ATP + H2O = L-asparaginyl-tRNA(Asn) + L-glutamate + ADP + phosphate + 2 H(+). Allows the formation of correctly charged Asn-tRNA(Asn) or Gln-tRNA(Gln) through the transamidation of misacylated Asp-tRNA(Asn) or Glu-tRNA(Gln) in organisms which lack either or both of asparaginyl-tRNA or glutaminyl-tRNA synthetases. The reaction takes place in the presence of glutamine and ATP through an activated phospho-Asp-tRNA(Asn) or phospho-Glu-tRNA(Gln). The chain is Aspartyl/glutamyl-tRNA(Asn/Gln) amidotransferase subunit B from Anaplasma marginale (strain Florida).